Consider the following 106-residue polypeptide: Large ribosomal subunit protein uL24 (106 aa).

This sequence belongs to the universal ribosomal protein uL24 family. Part of the 50S ribosomal subunit.

One of two assembly initiator proteins, it binds directly to the 5'-end of the 23S rRNA, where it nucleates assembly of the 50S subunit. Its function is as follows. One of the proteins that surrounds the polypeptide exit tunnel on the outside of the subunit. The chain is Large ribosomal subunit protein uL24 from Azobacteroides pseudotrichonymphae genomovar. CFP2.